The sequence spans 720 residues: Fatty acid CoA ligase Acsl3 (720 aa).

A helical; Signal-anchor for type III membrane protein transmembrane segment spans residues 21-41; sequence ILLYFIHFIISLYTILTYIPF. The Cytoplasmic portion of the chain corresponds to 42-720; that stretch reads YFLCESKQEK…ADIERMYGRK (679 aa). Residue Ser683 is modified to Phosphoserine.

This sequence belongs to the ATP-dependent AMP-binding enzyme family. Mg(2+) serves as cofactor. Predominantly expressed in the brain, and to a much lesser extent, in lung, adrenal gland, kidney, small intestine, and adipose tissue but not detected in heart or liver.

Its subcellular location is the mitochondrion outer membrane. The protein localises to the peroxisome membrane. It is found in the microsome membrane. It localises to the endoplasmic reticulum membrane. It catalyses the reaction a long-chain fatty acid + ATP + CoA = a long-chain fatty acyl-CoA + AMP + diphosphate. The enzyme catalyses (5Z,8Z,11Z,14Z)-eicosatetraenoate + ATP + CoA = (5Z,8Z,11Z,14Z)-eicosatetraenoyl-CoA + AMP + diphosphate. The catalysed reaction is a medium-chain fatty acid + ATP + CoA = a medium-chain fatty acyl-CoA + AMP + diphosphate. It carries out the reaction 15-hydroxy-(5Z,8Z,11Z,13E)-eicosatetraenoate + ATP + CoA = 15-hydroxy-(5Z,8Z,11Z,13E)-eicosatetraenoyl-CoA + AMP + diphosphate. It catalyses the reaction 12-hydroxy-(5Z,8Z,10E,14Z)-eicosatetraenoate + ATP + CoA = 12-hydroxy-(5Z,8Z,10E,14Z)-eicosatetraenoyl-CoA + AMP + diphosphate. The enzyme catalyses 5-hydroxy-(6E,8Z,11Z,14Z)-eicosatetraenoate + ATP + CoA = 5-hydroxy-(6E,8Z,11Z,14Z)-eicosatetraenoyl-CoA + AMP + diphosphate. The catalysed reaction is 14,15-epoxy-(5Z,8Z,11Z)-eicosatrienoate + ATP + CoA = 14,15-epoxy-(5Z,8Z,11Z)-eicosatrienoyl-CoA + AMP + diphosphate. It carries out the reaction 11,12-epoxy-(5Z,8Z,14Z)-eicosatrienoate + ATP + CoA = 11,12-epoxy-(5Z,8Z,14Z)-eicosatrienoyl-CoA + AMP + diphosphate. It catalyses the reaction (E)-hexadec-2-enoate + ATP + CoA = (2E)-hexadecenoyl-CoA + AMP + diphosphate. The enzyme catalyses hexadecanoate + ATP + CoA = hexadecanoyl-CoA + AMP + diphosphate. The catalysed reaction is tetradecanoate + ATP + CoA = tetradecanoyl-CoA + AMP + diphosphate. It carries out the reaction dodecanoate + ATP + CoA = dodecanoyl-CoA + AMP + diphosphate. It catalyses the reaction octadecanoate + ATP + CoA = octadecanoyl-CoA + AMP + diphosphate. The enzyme catalyses eicosanoate + ATP + CoA = eicosanoyl-CoA + AMP + diphosphate. The catalysed reaction is (9Z)-octadecenoate + ATP + CoA = (9Z)-octadecenoyl-CoA + AMP + diphosphate. It carries out the reaction (9Z)-hexadecenoate + ATP + CoA = (9Z)-hexadecenoyl-CoA + AMP + diphosphate. It catalyses the reaction (9Z,12Z)-octadecadienoate + ATP + CoA = (9Z,12Z)-octadecadienoyl-CoA + AMP + diphosphate. The enzyme catalyses (9Z,12Z,15Z)-octadecatrienoate + ATP + CoA = (9Z,12Z,15Z)-octadecatrienoyl-CoA + AMP + diphosphate. The catalysed reaction is (4Z,7Z,10Z,13Z,16Z,19Z)-docosahexaenoate + ATP + CoA = (4Z,7Z,10Z,13Z,16Z,19Z)-docosahexaenoyl-CoA + AMP + diphosphate. It carries out the reaction (5Z,8Z,11Z,14Z,17Z)-eicosapentaenoate + ATP + CoA = (5Z,8Z,11Z,14Z,17Z)-eicosapentaenoyl-CoA + AMP + diphosphate. It catalyses the reaction a fatty acid + ATP + CoA = a fatty acyl-CoA + AMP + diphosphate. Functionally, catalyzes the conversion of long-chain fatty acids to their active form acyl-CoA for both synthesis of cellular lipids, and degradation via beta-oxidation. ACSL3 is required for the incorporation of fatty acids into phosphatidylcholine, the major phospholipid located on the surface of VLDL (very low density lipoproteins). Has mainly an anabolic role in energy metabolism. Mediates hepatic lipogenesis. Preferentially uses myristate, laurate, arachidonate and eicosapentaenoate as substrates. Both isoforms exhibit the same level of activity. The chain is Fatty acid CoA ligase Acsl3 from Rattus norvegicus (Rat).